A 351-amino-acid chain; its full sequence is Signal recognition particle receptor FtsY (351 aa).

Residues 152-159 (GVNGSGKT), 235-239 (DTAGR), and 299-302 (TKMD) each bind GTP.

Belongs to the GTP-binding SRP family. FtsY subfamily. Part of the signal recognition particle protein translocation system, which is composed of SRP and FtsY.

It localises to the cell membrane. Its subcellular location is the cytoplasm. The enzyme catalyses GTP + H2O = GDP + phosphate + H(+). Functionally, involved in targeting and insertion of nascent membrane proteins into the cytoplasmic membrane. Acts as a receptor for the complex formed by the signal recognition particle (SRP) and the ribosome-nascent chain (RNC). In Metamycoplasma hominis (strain ATCC 23114 / DSM 25592 / NBRC 14850 / NCTC 10111 / PG21) (Mycoplasma hominis), this protein is Signal recognition particle receptor FtsY.